Reading from the N-terminus, the 287-residue chain is Glutamate racemase (287 aa).

Substrate-binding positions include 32 to 33 (DS) and 64 to 65 (YG). Catalysis depends on C96, which acts as the Proton donor/acceptor. 97-98 (NT) lines the substrate pocket. Residue C208 is the Proton donor/acceptor of the active site. 209–210 (TH) contacts substrate.

This sequence belongs to the aspartate/glutamate racemases family.

It carries out the reaction L-glutamate = D-glutamate. It functions in the pathway cell wall biogenesis; peptidoglycan biosynthesis. Provides the (R)-glutamate required for cell wall biosynthesis. The sequence is that of Glutamate racemase from Serratia proteamaculans (strain 568).